The primary structure comprises 209 residues: Leucyl/phenylalanyl-tRNA--protein transferase (209 aa).

The protein belongs to the L/F-transferase family.

The protein localises to the cytoplasm. The enzyme catalyses N-terminal L-lysyl-[protein] + L-leucyl-tRNA(Leu) = N-terminal L-leucyl-L-lysyl-[protein] + tRNA(Leu) + H(+). It catalyses the reaction N-terminal L-arginyl-[protein] + L-leucyl-tRNA(Leu) = N-terminal L-leucyl-L-arginyl-[protein] + tRNA(Leu) + H(+). The catalysed reaction is L-phenylalanyl-tRNA(Phe) + an N-terminal L-alpha-aminoacyl-[protein] = an N-terminal L-phenylalanyl-L-alpha-aminoacyl-[protein] + tRNA(Phe). Functions in the N-end rule pathway of protein degradation where it conjugates Leu, Phe and, less efficiently, Met from aminoacyl-tRNAs to the N-termini of proteins containing an N-terminal arginine or lysine. The chain is Leucyl/phenylalanyl-tRNA--protein transferase from Paramagnetospirillum magneticum (strain ATCC 700264 / AMB-1) (Magnetospirillum magneticum).